The chain runs to 90 residues: Probable Fe(2+)-trafficking protein (90 aa).

This sequence belongs to the Fe(2+)-trafficking protein family. As to quaternary structure, monomer.

Could be a mediator in iron transactions between iron acquisition and iron-requiring processes, such as synthesis and/or repair of Fe-S clusters in biosynthetic enzymes. The protein is Probable Fe(2+)-trafficking protein of Yersinia enterocolitica serotype O:8 / biotype 1B (strain NCTC 13174 / 8081).